Here is a 255-residue protein sequence, read N- to C-terminus: H-2 class II histocompatibility antigen, E-K alpha chain (255 aa).

Positions M1 to A25 are cleaved as a signal peptide. The interval I26–N109 is alpha-1. Residues I26–E216 lie on the Extracellular side of the membrane. An alpha-2 region spans residues V110–W203. Residues P112–E204 enclose the Ig-like C1-type domain. An intrachain disulfide couples C132 to C188. A glycan (N-linked (GlcNAc...) asparagine) is linked at N143. Residues E204 to E216 are connecting peptide. The helical transmembrane segment at N217–I242 threads the bilayer. Over K243–L255 the chain is Cytoplasmic.

The protein belongs to the MHC class II family.

It is found in the membrane. The sequence is that of H-2 class II histocompatibility antigen, E-K alpha chain from Mus musculus (Mouse).